An 869-amino-acid polypeptide reads, in one-letter code: Valine--tRNA ligase (869 aa).

The 'HIGH' region signature appears at 47–57; that stretch reads PYPTGNFHIGN. The 'KMSKS' region motif lies at 521-525; the sequence is KMSKS. Lys-524 provides a ligand contact to ATP.

Belongs to the class-I aminoacyl-tRNA synthetase family. ValS type 2 subfamily.

The protein localises to the cytoplasm. It carries out the reaction tRNA(Val) + L-valine + ATP = L-valyl-tRNA(Val) + AMP + diphosphate. Catalyzes the attachment of valine to tRNA(Val). As ValRS can inadvertently accommodate and process structurally similar amino acids such as threonine, to avoid such errors, it has a 'posttransfer' editing activity that hydrolyzes mischarged Thr-tRNA(Val) in a tRNA-dependent manner. The chain is Valine--tRNA ligase from Methanosarcina barkeri (strain Fusaro / DSM 804).